The sequence spans 676 residues: UvrABC system protein B (676 aa).

The Helicase ATP-binding domain occupies 26–414 (EGLDAGLAHQ…SAGEIADQVV (389 aa)). ATP is bound at residue 39-46 (GVTGSGKT). The short motif at 92–115 (YYDYYQPEAYVPTTDTFIEKDSSV) is the Beta-hairpin element. One can recognise a Helicase C-terminal domain in the interval 432–598 (QVDDLLSEIR…ALKRNIKDIM (167 aa)). The UVR domain maps to 636 to 671 (EKEITKLEAQMYKHAQDLEFELAAQKRDEIEKLRQQ).

Belongs to the UvrB family. As to quaternary structure, forms a heterotetramer with UvrA during the search for lesions. Interacts with UvrC in an incision complex.

The protein localises to the cytoplasm. Its function is as follows. The UvrABC repair system catalyzes the recognition and processing of DNA lesions. A damage recognition complex composed of 2 UvrA and 2 UvrB subunits scans DNA for abnormalities. Upon binding of the UvrA(2)B(2) complex to a putative damaged site, the DNA wraps around one UvrB monomer. DNA wrap is dependent on ATP binding by UvrB and probably causes local melting of the DNA helix, facilitating insertion of UvrB beta-hairpin between the DNA strands. Then UvrB probes one DNA strand for the presence of a lesion. If a lesion is found the UvrA subunits dissociate and the UvrB-DNA preincision complex is formed. This complex is subsequently bound by UvrC and the second UvrB is released. If no lesion is found, the DNA wraps around the other UvrB subunit that will check the other stand for damage. The polypeptide is UvrABC system protein B (Vibrio vulnificus (strain CMCP6)).